We begin with the raw amino-acid sequence, 477 residues long: MRALPLNIGTIHFVGIGGIGMSGIAEVLHMLGYKVQGSDIAEGANVQRLRQAGIVVHIGHDAANLGDAQVVVTSTAVKKDNPEVVAARAKLIPVVRRAEMLAELMRLRWSVAIGGTHGKTTTTSLVACVLEHARLDPTVINGGIIEAYGTNTRMGSGDWMVVEADESDGSFLRLPAVIAVVTNMDPEHLDHWGTEEAMQAGYDQFVSNIPFYGFAVLCVDHPQVQQMIPRLSDHRVITYGFSPQADIRAEKVVMDKRGATFEVVVTNRQRNRSRRAGPFRLPMLGHHNVLNSLAAIAVALEMEISDSVIASALTTFKGVKRRFTRTGEYNGISIVDDYGHHPVEIAAVLKAARQAGARNVIAVMQPHRYSRLKVLFNEFCTCMNDADTVIVADVYAAGETPIEGAGRDALVEGLRDRGHRSVVPLPDPAHLAEMINAIAKPGDYVVCLGAGTITQWAQALPAQLEALNRQPATEGAA.

115–121 (GTHGKTT) contacts ATP.

The protein belongs to the MurCDEF family.

Its subcellular location is the cytoplasm. The catalysed reaction is UDP-N-acetyl-alpha-D-muramate + L-alanine + ATP = UDP-N-acetyl-alpha-D-muramoyl-L-alanine + ADP + phosphate + H(+). It functions in the pathway cell wall biogenesis; peptidoglycan biosynthesis. In terms of biological role, cell wall formation. In Gluconobacter oxydans (strain 621H) (Gluconobacter suboxydans), this protein is UDP-N-acetylmuramate--L-alanine ligase.